A 2292-amino-acid polypeptide reads, in one-letter code: Protein Ycf2 (2292 aa).

1640–1647 (GSIGIGRS) contacts ATP.

It belongs to the Ycf2 family.

Its subcellular location is the plastid. It is found in the chloroplast stroma. Probable ATPase of unknown function. Its presence in a non-photosynthetic plant (Epifagus virginiana) and experiments in tobacco indicate that it has an essential function which is probably not related to photosynthesis. The polypeptide is Protein Ycf2 (Liriodendron tulipifera (Tuliptree)).